A 497-amino-acid polypeptide reads, in one-letter code: MAKPKKTPRPKAQTPKGFRDYFGTEVTERKAMLDKIAEVYHLYGFDPLETSAVETVEALGKFLPDVDRPNEGVFAWQEDDADWLALRYDLTAPLARVAAQYRNDLPSPYRRYAMGPVWRNEKPGPGRFRQFYQCDADTVGAPSVAADAEVCAMLATALEAVGIARGDYIVRVNNRKVLNGVFESAGLLDSEYLADNLKRVGIAIRAVDKFDRLGSDGVKALLGKGREDESGAFVEGANLAEWQIDRILGFATAKQSTELETLDRLTELVGNSDEGLQGVEELKHISDLLSAQGFGPDRIVIDPSVVRGLGYYTGPVFEAELTFEVQNDKGQTVQFGSVAGGGRYDDLVKRFTGQAVPATGVSIGVDRLLAALRAKGQAQTAAPGPVIVTVMDRDRIADYQAMVGTLRDAGIRAELYLGNPKNFGNQLKYADKRAAPVAVIQGSDEAARGVVQIKDLVLGAQIAESASLDEWKSQPAQREVPVADLVAEVQAILARGA.

The protein belongs to the class-II aminoacyl-tRNA synthetase family. In terms of assembly, homodimer.

It localises to the cytoplasm. The enzyme catalyses tRNA(His) + L-histidine + ATP = L-histidyl-tRNA(His) + AMP + diphosphate + H(+). This chain is Histidine--tRNA ligase, found in Dinoroseobacter shibae (strain DSM 16493 / NCIMB 14021 / DFL 12).